Consider the following 483-residue polypeptide: UDP-N-acetylmuramate--L-alanine ligase (483 aa).

125 to 131 (GTHGKTT) is an ATP binding site.

This sequence belongs to the MurCDEF family.

It is found in the cytoplasm. The enzyme catalyses UDP-N-acetyl-alpha-D-muramate + L-alanine + ATP = UDP-N-acetyl-alpha-D-muramoyl-L-alanine + ADP + phosphate + H(+). The protein operates within cell wall biogenesis; peptidoglycan biosynthesis. Cell wall formation. The chain is UDP-N-acetylmuramate--L-alanine ligase from Pseudoalteromonas translucida (strain TAC 125).